Reading from the N-terminus, the 265-residue chain is Silencing boundary-establishment protein FUB1-like protein (265 aa).

Residues 194 to 265 (HPENRSRNEQ…MPPGSSDMFM (72 aa)) form a disordered region.

The protein belongs to the proteasome inhibitor PI31 family. As to quaternary structure, interacts with the 20S proteasome.

The protein localises to the cytoplasm. Its subcellular location is the nucleus. Its function is as follows. May play a role in the establishment of transcriptional silencing boundaries, preventing the propagation of heterochromatic silencing. This chain is Silencing boundary-establishment protein FUB1-like protein, found in Schizosaccharomyces pombe (strain 972 / ATCC 24843) (Fission yeast).